The chain runs to 430 residues: 3-phosphoshikimate 1-carboxyvinyltransferase (430 aa).

Positions 21, 22, and 26 each coordinate 3-phosphoshikimate. Phosphoenolpyruvate is bound at residue Lys-21. Phosphoenolpyruvate is bound by residues Gly-94 and Arg-122. Residues Ser-168, Gln-170, Asp-315, and Lys-342 each coordinate 3-phosphoshikimate. Gln-170 contacts phosphoenolpyruvate. Asp-315 (proton acceptor) is an active-site residue. Phosphoenolpyruvate-binding residues include Arg-346 and Arg-389.

This sequence belongs to the EPSP synthase family. In terms of assembly, monomer.

It localises to the cytoplasm. The enzyme catalyses 3-phosphoshikimate + phosphoenolpyruvate = 5-O-(1-carboxyvinyl)-3-phosphoshikimate + phosphate. The protein operates within metabolic intermediate biosynthesis; chorismate biosynthesis; chorismate from D-erythrose 4-phosphate and phosphoenolpyruvate: step 6/7. In terms of biological role, catalyzes the transfer of the enolpyruvyl moiety of phosphoenolpyruvate (PEP) to the 5-hydroxyl of shikimate-3-phosphate (S3P) to produce enolpyruvyl shikimate-3-phosphate and inorganic phosphate. This is 3-phosphoshikimate 1-carboxyvinyltransferase from Salinibacter ruber (strain DSM 13855 / M31).